Here is a 221-residue protein sequence, read N- to C-terminus: Ribosome maturation factor RimM (221 aa).

The interval 1-23 (MTERKQGAAAPRPLNRPQGESPK) is disordered. The PRC barrel domain maps to 144-221 (ENEFYWVDLI…RIVVDWGLDY (78 aa)).

The protein belongs to the RimM family. In terms of assembly, binds ribosomal protein uS19.

It is found in the cytoplasm. An accessory protein needed during the final step in the assembly of 30S ribosomal subunit, possibly for assembly of the head region. Essential for efficient processing of 16S rRNA. May be needed both before and after RbfA during the maturation of 16S rRNA. It has affinity for free ribosomal 30S subunits but not for 70S ribosomes. The protein is Ribosome maturation factor RimM of Cupriavidus pinatubonensis (strain JMP 134 / LMG 1197) (Cupriavidus necator (strain JMP 134)).